The primary structure comprises 112 residues: Small ribosomal subunit protein bS16 (112 aa).

The protein belongs to the bacterial ribosomal protein bS16 family.

In Aquifex aeolicus (strain VF5), this protein is Small ribosomal subunit protein bS16.